The primary structure comprises 140 residues: Protein NrdI (140 aa).

This sequence belongs to the NrdI family.

Probably involved in ribonucleotide reductase function. The polypeptide is Protein NrdI (Ruegeria sp. (strain TM1040) (Silicibacter sp.)).